Reading from the N-terminus, the 387-residue chain is Phosphoglycerate kinase (387 aa).

Substrate-binding positions include 21-23, Arg-36, 59-62, Arg-113, and Arg-146; these read DLN and HLGR. Residues Lys-197, Glu-314, and 340–343 each bind ATP; that span reads GGDT.

It belongs to the phosphoglycerate kinase family. Monomer.

It localises to the cytoplasm. It carries out the reaction (2R)-3-phosphoglycerate + ATP = (2R)-3-phospho-glyceroyl phosphate + ADP. It functions in the pathway carbohydrate degradation; glycolysis; pyruvate from D-glyceraldehyde 3-phosphate: step 2/5. This chain is Phosphoglycerate kinase, found in Pseudomonas syringae pv. syringae (strain B728a).